We begin with the raw amino-acid sequence, 80 residues long: Large ribosomal subunit protein bL31 (80 aa).

Zn(2+) contacts are provided by cysteine 16, cysteine 18, cysteine 38, and cysteine 41.

This sequence belongs to the bacterial ribosomal protein bL31 family. Type A subfamily. Part of the 50S ribosomal subunit. It depends on Zn(2+) as a cofactor.

Functionally, binds the 23S rRNA. The polypeptide is Large ribosomal subunit protein bL31 (Mycobacterium bovis (strain ATCC BAA-935 / AF2122/97)).